A 260-amino-acid chain; its full sequence is DNA import protein CedA (260 aa).

The next 6 membrane-spanning stretches (helical) occupy residues 13-33 (LLASLTYFIGAAIYALPVPVY), 47-67 (IYVVVWNSIYLGVLLFLGELL), 110-130 (ALIQVVPFGALLTVITSALTF), 140-160 (IVYQYVAVFIATGVLFLSIPF), 169-189 (AFIGSGIVFYVGLPYLPQFLA), and 220-240 (IITSLVIGPVIYIFILVGFSM).

In terms of assembly, forms a complex composed of CedA, CedA1 and CedA2.

Its subcellular location is the cell membrane. Functionally, part of the Ced system, which is involved in DNA import. The sequence is that of DNA import protein CedA from Sulfolobus acidocaldarius (strain ATCC 33909 / DSM 639 / JCM 8929 / NBRC 15157 / NCIMB 11770).